The following is a 361-amino-acid chain: DNA replication and repair protein RecF (361 aa).

Position 30 to 37 (30 to 37 (GDNAQGKT)) interacts with ATP.

This sequence belongs to the RecF family.

It localises to the cytoplasm. Functionally, the RecF protein is involved in DNA metabolism; it is required for DNA replication and normal SOS inducibility. RecF binds preferentially to single-stranded, linear DNA. It also seems to bind ATP. This is DNA replication and repair protein RecF from Clostridium perfringens (strain ATCC 13124 / DSM 756 / JCM 1290 / NCIMB 6125 / NCTC 8237 / Type A).